We begin with the raw amino-acid sequence, 348 residues long: Holliday junction branch migration complex subunit RuvB (348 aa).

The segment at 4–184 (ADRLIAASGR…FGIVQRLEFY (181 aa)) is large ATPase domain (RuvB-L). ATP-binding positions include I23, R24, G65, K68, T69, T70, 131–133 (EDF), R174, Y184, and R221. Residue T69 coordinates Mg(2+). The tract at residues 185–255 (SDKDLATIVS…VADMALNLLD (71 aa)) is small ATPAse domain (RuvB-S). A head domain (RuvB-H) region spans residues 258 to 348 (ERGFDHSDRR…GGDFSEPGDE (91 aa)). DNA is bound by residues R294, R313, and R318.

It belongs to the RuvB family. In terms of assembly, homohexamer. Forms an RuvA(8)-RuvB(12)-Holliday junction (HJ) complex. HJ DNA is sandwiched between 2 RuvA tetramers; dsDNA enters through RuvA and exits via RuvB. An RuvB hexamer assembles on each DNA strand where it exits the tetramer. Each RuvB hexamer is contacted by two RuvA subunits (via domain III) on 2 adjacent RuvB subunits; this complex drives branch migration. In the full resolvosome a probable DNA-RuvA(4)-RuvB(12)-RuvC(2) complex forms which resolves the HJ.

The protein resides in the cytoplasm. The catalysed reaction is ATP + H2O = ADP + phosphate + H(+). Its function is as follows. The RuvA-RuvB-RuvC complex processes Holliday junction (HJ) DNA during genetic recombination and DNA repair, while the RuvA-RuvB complex plays an important role in the rescue of blocked DNA replication forks via replication fork reversal (RFR). RuvA specifically binds to HJ cruciform DNA, conferring on it an open structure. The RuvB hexamer acts as an ATP-dependent pump, pulling dsDNA into and through the RuvAB complex. RuvB forms 2 homohexamers on either side of HJ DNA bound by 1 or 2 RuvA tetramers; 4 subunits per hexamer contact DNA at a time. Coordinated motions by a converter formed by DNA-disengaged RuvB subunits stimulates ATP hydrolysis and nucleotide exchange. Immobilization of the converter enables RuvB to convert the ATP-contained energy into a lever motion, pulling 2 nucleotides of DNA out of the RuvA tetramer per ATP hydrolyzed, thus driving DNA branch migration. The RuvB motors rotate together with the DNA substrate, which together with the progressing nucleotide cycle form the mechanistic basis for DNA recombination by continuous HJ branch migration. Branch migration allows RuvC to scan DNA until it finds its consensus sequence, where it cleaves and resolves cruciform DNA. The protein is Holliday junction branch migration complex subunit RuvB of Pseudomonas putida (strain GB-1).